A 497-amino-acid polypeptide reads, in one-letter code: Cytochrome P450 3A18 (497 aa).

Cysteine 442 contributes to the heme binding site.

Belongs to the cytochrome P450 family. It depends on heme as a cofactor.

Its subcellular location is the endoplasmic reticulum membrane. The protein resides in the microsome membrane. It catalyses the reaction an organic molecule + reduced [NADPH--hemoprotein reductase] + O2 = an alcohol + oxidized [NADPH--hemoprotein reductase] + H2O + H(+). In terms of biological role, catalyzes 16-beta- and 6-alpha-hydroxylations of testosterone. The polypeptide is Cytochrome P450 3A18 (Cyp3a18) (Rattus norvegicus (Rat)).